The following is a 454-amino-acid chain: Bifunctional protein GlmU (454 aa).

Residues 1-226 form a pyrophosphorylase region; the sequence is MSTTVIILAA…AFEVEGVNDR (226 aa). UDP-N-acetyl-alpha-D-glucosamine contacts are provided by residues 8–11, lysine 22, glutamine 73, 78–79, 100–102, glycine 137, glutamate 151, asparagine 166, and asparagine 224; these read LAAG, GT, and YGD. Residue aspartate 102 coordinates Mg(2+). A Mg(2+)-binding site is contributed by asparagine 224. The linker stretch occupies residues 227–247; it reads LQLAALEREFQKQQAKELMQQ. Positions 248 to 454 are N-acetyltransferase; that stretch reads GVTFADPARF…NYQRPQKLKK (207 aa). Positions 330 and 348 each coordinate UDP-N-acetyl-alpha-D-glucosamine. Histidine 360 serves as the catalytic Proton acceptor. Positions 363 and 374 each coordinate UDP-N-acetyl-alpha-D-glucosamine. Acetyl-CoA is bound by residues alanine 377, 383–384, serine 402, alanine 420, and arginine 437; that span reads NY.

In the N-terminal section; belongs to the N-acetylglucosamine-1-phosphate uridyltransferase family. It in the C-terminal section; belongs to the transferase hexapeptide repeat family. As to quaternary structure, homotrimer. Requires Mg(2+) as cofactor.

The protein resides in the cytoplasm. The catalysed reaction is alpha-D-glucosamine 1-phosphate + acetyl-CoA = N-acetyl-alpha-D-glucosamine 1-phosphate + CoA + H(+). It catalyses the reaction N-acetyl-alpha-D-glucosamine 1-phosphate + UTP + H(+) = UDP-N-acetyl-alpha-D-glucosamine + diphosphate. The protein operates within nucleotide-sugar biosynthesis; UDP-N-acetyl-alpha-D-glucosamine biosynthesis; N-acetyl-alpha-D-glucosamine 1-phosphate from alpha-D-glucosamine 6-phosphate (route II): step 2/2. It participates in nucleotide-sugar biosynthesis; UDP-N-acetyl-alpha-D-glucosamine biosynthesis; UDP-N-acetyl-alpha-D-glucosamine from N-acetyl-alpha-D-glucosamine 1-phosphate: step 1/1. It functions in the pathway bacterial outer membrane biogenesis; LPS lipid A biosynthesis. Its function is as follows. Catalyzes the last two sequential reactions in the de novo biosynthetic pathway for UDP-N-acetylglucosamine (UDP-GlcNAc). The C-terminal domain catalyzes the transfer of acetyl group from acetyl coenzyme A to glucosamine-1-phosphate (GlcN-1-P) to produce N-acetylglucosamine-1-phosphate (GlcNAc-1-P), which is converted into UDP-GlcNAc by the transfer of uridine 5-monophosphate (from uridine 5-triphosphate), a reaction catalyzed by the N-terminal domain. The protein is Bifunctional protein GlmU of Acinetobacter baumannii (strain AYE).